The following is a 386-amino-acid chain: Orphan methyltransferase M.SssI (386 aa).

Residues 11–386 form the SAM-dependent MTase C5-type domain; that stretch reads LRVFEAFAGI…LEAIIDKIGG (376 aa). Cys-141 is a catalytic residue.

This sequence belongs to the class I-like SAM-binding methyltransferase superfamily. C5-methyltransferase family.

The enzyme catalyses a 2'-deoxycytidine in DNA + S-adenosyl-L-methionine = a 5-methyl-2'-deoxycytidine in DNA + S-adenosyl-L-homocysteine + H(+). Functionally, this de novo methylase acts completely and exclusively on CG residues in DNA; methylates unmethylated and hemi-methylated DNA. The polypeptide is Orphan methyltransferase M.SssI (sssIM) (Spiroplasma monobiae (strain ATCC 33825 / MQ-1)).